Reading from the N-terminus, the 401-residue chain is Phosphoglycerate kinase (401 aa).

Residues 23-25 (DFN), arginine 39, 62-65 (HLGR), arginine 121, and arginine 154 each bind substrate. ATP contacts are provided by residues lysine 207, glycine 298, glutamate 329, and 355–358 (GGDT).

This sequence belongs to the phosphoglycerate kinase family. In terms of assembly, monomer.

The protein resides in the cytoplasm. The catalysed reaction is (2R)-3-phosphoglycerate + ATP = (2R)-3-phospho-glyceroyl phosphate + ADP. Its pathway is carbohydrate degradation; glycolysis; pyruvate from D-glyceraldehyde 3-phosphate: step 2/5. The sequence is that of Phosphoglycerate kinase from Campylobacter fetus subsp. fetus (strain 82-40).